Reading from the N-terminus, the 679-residue chain is Biosynthetic arginine decarboxylase (679 aa).

Positions 1-43 are disordered; that stretch reads MKHRGQEEMGVESTATSDEVVKVPANGNKLEGKNHKQKKLLPT. An N6-(pyridoxal phosphate)lysine modification is found at lysine 149. Residue 331–341 coordinates substrate; it reads LDVGGGLGVDY.

It belongs to the Orn/Lys/Arg decarboxylase class-II family. SpeA subfamily. Requires Mg(2+) as cofactor. Pyridoxal 5'-phosphate serves as cofactor.

The catalysed reaction is L-arginine + H(+) = agmatine + CO2. Its function is as follows. Catalyzes the biosynthesis of agmatine from arginine. This is Biosynthetic arginine decarboxylase from Nostoc sp. (strain PCC 7120 / SAG 25.82 / UTEX 2576).